A 254-amino-acid chain; its full sequence is Large ribosomal subunit protein uL2B (254 aa).

Residue K46 forms a Glycyl lysine isopeptide (Lys-Gly) (interchain with G-Cter in ubiquitin) linkage. Residue S52 is modified to Phosphoserine. K93 participates in a covalent cross-link: Glycyl lysine isopeptide (Lys-Gly) (interchain with G-Cter in ubiquitin). S95 bears the Phosphoserine mark. Residues K119 and K145 each participate in a glycyl lysine isopeptide (Lys-Gly) (interchain with G-Cter in ubiquitin) cross-link. S159, S160, and S249 each carry phosphoserine.

The protein belongs to the universal ribosomal protein uL2 family. Component of the large ribosomal subunit (LSU). Mature yeast ribosomes consist of a small (40S) and a large (60S) subunit. The 40S small subunit contains 1 molecule of ribosomal RNA (18S rRNA) and 33 different proteins (encoded by 57 genes). The large 60S subunit contains 3 rRNA molecules (25S, 5.8S and 5S rRNA) and 46 different proteins (encoded by 81 genes).

Its subcellular location is the cytoplasm. Functionally, component of the ribosome, a large ribonucleoprotein complex responsible for the synthesis of proteins in the cell. The small ribosomal subunit (SSU) binds messenger RNAs (mRNAs) and translates the encoded message by selecting cognate aminoacyl-transfer RNA (tRNA) molecules. The large subunit (LSU) contains the ribosomal catalytic site termed the peptidyl transferase center (PTC), which catalyzes the formation of peptide bonds, thereby polymerizing the amino acids delivered by tRNAs into a polypeptide chain. The nascent polypeptides leave the ribosome through a tunnel in the LSU and interact with protein factors that function in enzymatic processing, targeting, and the membrane insertion of nascent chains at the exit of the ribosomal tunnel. The polypeptide is Large ribosomal subunit protein uL2B (Saccharomyces cerevisiae (strain ATCC 204508 / S288c) (Baker's yeast)).